The primary structure comprises 179 residues: ATP synthase subunit delta (179 aa).

It belongs to the ATPase delta chain family. In terms of assembly, F-type ATPases have 2 components, F(1) - the catalytic core - and F(0) - the membrane proton channel. F(1) has five subunits: alpha(3), beta(3), gamma(1), delta(1), epsilon(1). F(0) has three main subunits: a(1), b(2) and c(10-14). The alpha and beta chains form an alternating ring which encloses part of the gamma chain. F(1) is attached to F(0) by a central stalk formed by the gamma and epsilon chains, while a peripheral stalk is formed by the delta and b chains.

The protein localises to the cell membrane. Its function is as follows. F(1)F(0) ATP synthase produces ATP from ADP in the presence of a proton or sodium gradient. F-type ATPases consist of two structural domains, F(1) containing the extramembraneous catalytic core and F(0) containing the membrane proton channel, linked together by a central stalk and a peripheral stalk. During catalysis, ATP synthesis in the catalytic domain of F(1) is coupled via a rotary mechanism of the central stalk subunits to proton translocation. Functionally, this protein is part of the stalk that links CF(0) to CF(1). It either transmits conformational changes from CF(0) to CF(1) or is implicated in proton conduction. This is ATP synthase subunit delta from Clostridium botulinum (strain Langeland / NCTC 10281 / Type F).